Consider the following 164-residue polypeptide: Succinate dehydrogenase assembly factor 2, mitochondrial (164 aa).

The protein belongs to the SDHAF2 family. In terms of assembly, interacts with the flavoprotein subunit within the SDH catalytic dimer.

The protein localises to the mitochondrion matrix. In terms of biological role, plays an essential role in the assembly of succinate dehydrogenase (SDH), an enzyme complex (also referred to as respiratory complex II) that is a component of both the tricarboxylic acid (TCA) cycle and the mitochondrial electron transport chain, and which couples the oxidation of succinate to fumarate with the reduction of ubiquinone (coenzyme Q) to ubiquinol. Required for flavinylation (covalent attachment of FAD) of the flavoprotein subunit of the SDH catalytic dimer. The chain is Succinate dehydrogenase assembly factor 2, mitochondrial from Lodderomyces elongisporus (strain ATCC 11503 / CBS 2605 / JCM 1781 / NBRC 1676 / NRRL YB-4239) (Yeast).